The following is a 130-amino-acid chain: Small ribosomal subunit protein uS8 (130 aa).

Belongs to the universal ribosomal protein uS8 family. Part of the 30S ribosomal subunit. Contacts proteins S5 and S12.

Its function is as follows. One of the primary rRNA binding proteins, it binds directly to 16S rRNA central domain where it helps coordinate assembly of the platform of the 30S subunit. This is Small ribosomal subunit protein uS8 from Aeromonas salmonicida (strain A449).